Consider the following 117-residue polypeptide: MDKKVARIRRASRARHLMREQGATRLVVHRTPRHIYAQVIAPNGSEVLAAASTVEKVIKEQVKYTGNKEAAAVVGKIVAERALEKGIKAVAFDRSGFKYHGRVQSLADAAREAGLQF.

This sequence belongs to the universal ribosomal protein uL18 family. In terms of assembly, part of the 50S ribosomal subunit; part of the 5S rRNA/L5/L18/L25 subcomplex. Contacts the 5S and 23S rRNAs.

This is one of the proteins that bind and probably mediate the attachment of the 5S RNA into the large ribosomal subunit, where it forms part of the central protuberance. This chain is Large ribosomal subunit protein uL18, found in Glaesserella parasuis serovar 5 (strain SH0165) (Haemophilus parasuis).